The following is an 84-amino-acid chain: Small ribosomal subunit protein eS27z (84 aa).

The segment at 39-61 (CQGCFNITTVFSHSQTVVMCGNC) adopts a C4-type zinc-finger fold.

Belongs to the eukaryotic ribosomal protein eS27 family. In terms of assembly, (Microbial infection) May interact with Tomato yellow leaf curl virus (TYLCV) and papaya leaf curl China virus (PaLcuCNV) C2 proteins. This interaction prevents activation of Jasmonate signaling, thereby facilitating viral uptake by insects vectors. It depends on Zn(2+) as a cofactor.

The protein is Small ribosomal subunit protein eS27z (RPS27A) of Arabidopsis thaliana (Mouse-ear cress).